Here is a 380-residue protein sequence, read N- to C-terminus: Cell division protein FtsZ 2 (380 aa).

Residues 47–51 (GAGNN), 134–136 (GTG), glutamate 165, arginine 168, and aspartate 211 contribute to the GTP site.

The protein belongs to the FtsZ family. As to quaternary structure, homodimer. Polymerizes to form a dynamic ring structure in a strictly GTP-dependent manner. Interacts directly with several other division proteins.

The protein resides in the cytoplasm. Its function is as follows. Essential cell division protein that forms a contractile ring structure (Z ring) at the future cell division site. The regulation of the ring assembly controls the timing and the location of cell division. One of the functions of the FtsZ ring is to recruit other cell division proteins to the septum to produce a new cell wall between the dividing cells. Binds GTP and shows GTPase activity. The chain is Cell division protein FtsZ 2 from Methanocaldococcus jannaschii (strain ATCC 43067 / DSM 2661 / JAL-1 / JCM 10045 / NBRC 100440) (Methanococcus jannaschii).